The sequence spans 830 residues: Penicillin-binding protein 1A (830 aa).

The segment covering 1–17 (MTERKREHKDRKQKKNS) has biased composition (basic residues). The disordered stretch occupies residues 1–20 (MTERKREHKDRKQKKNSPKN). The Cytoplasmic portion of the chain corresponds to 1-30 (MTERKREHKDRKQKKNSPKNQSKVTKFLKW). Residues 31-51 (FFIGILLLGITAVTVVGIYVL) traverse the membrane as a helical; Signal-anchor for type II membrane protein segment. Residues 52 to 830 (SIIRSSPELD…QNGQNNNITQ (779 aa)) lie on the Extracellular side of the membrane. Residues 72 to 244 (SILYDDQGNF…PTSYDGLSEA (173 aa)) are transglycosylase. Glu111 acts as the Proton donor; for transglycosylase activity in catalysis. Positions 378–663 (ASATIIDYKT…TSPIFGKIMG (286 aa)) are transpeptidase. The Acyl-ester intermediate; for transpeptidase activity role is filled by Ser417. The interval 731–830 (APDTNDNNNS…QNGQNNNITQ (100 aa)) is disordered. Residues 735–746 (NDNNNSGANEGN) show a composition bias toward low complexity. The span at 747-758 (KQQETKPEEVKP) shows a compositional bias: basic and acidic residues. 2 stretches are compositionally biased toward low complexity: residues 759–807 (NENN…NTNN) and 816–830 (GNNQNQNGQNNNITQ).

This sequence in the N-terminal section; belongs to the glycosyltransferase 51 family. It in the C-terminal section; belongs to the transpeptidase family.

The protein resides in the cell membrane. It carries out the reaction [GlcNAc-(1-&gt;4)-Mur2Ac(oyl-L-Ala-gamma-D-Glu-L-Lys-D-Ala-D-Ala)](n)-di-trans,octa-cis-undecaprenyl diphosphate + beta-D-GlcNAc-(1-&gt;4)-Mur2Ac(oyl-L-Ala-gamma-D-Glu-L-Lys-D-Ala-D-Ala)-di-trans,octa-cis-undecaprenyl diphosphate = [GlcNAc-(1-&gt;4)-Mur2Ac(oyl-L-Ala-gamma-D-Glu-L-Lys-D-Ala-D-Ala)](n+1)-di-trans,octa-cis-undecaprenyl diphosphate + di-trans,octa-cis-undecaprenyl diphosphate + H(+). The enzyme catalyses Preferential cleavage: (Ac)2-L-Lys-D-Ala-|-D-Ala. Also transpeptidation of peptidyl-alanyl moieties that are N-acyl substituents of D-alanine.. The protein operates within cell wall biogenesis; peptidoglycan biosynthesis. Its function is as follows. Cell wall formation. Synthesis of cross-linked peptidoglycan from the lipid intermediates. The enzyme has a penicillin-insensitive transglycosylase N-terminal domain (formation of linear glycan strands) and a penicillin-sensitive transpeptidase C-terminal domain (cross-linking of the peptide subunits). The chain is Penicillin-binding protein 1A (pbpA) from Clostridium perfringens (strain ATCC 13124 / DSM 756 / JCM 1290 / NCIMB 6125 / NCTC 8237 / Type A).